The following is a 437-amino-acid chain: Epsilon-sarcoglycan (437 aa).

The Extracellular segment spans residues 1–317 (MQLPRWWELG…LKSRDYYTDF (317 aa)). Asn-200 carries N-linked (GlcNAc...) asparagine glycosylation. Residues 318 to 338 (LITLAVPSAVALVLFLILAYI) traverse the membrane as a helical segment. At 339–437 (MCCRREGVEK…QQQTTGKWYP (99 aa)) the chain is on the cytoplasmic side.

This sequence belongs to the sarcoglycan alpha/epsilon family. Post-translationally, N-glycosylated. In terms of processing, ubiquitinated, leading to its degradation by the proteasome.

It localises to the cell membrane. Its subcellular location is the sarcolemma. It is found in the cytoplasm. The protein localises to the cytoskeleton. The protein resides in the cell projection. It localises to the dendrite. Its subcellular location is the golgi apparatus. Component of the sarcoglycan complex, a subcomplex of the dystrophin-glycoprotein complex which forms a link between the F-actin cytoskeleton and the extracellular matrix. The sequence is that of Epsilon-sarcoglycan from Macaca fascicularis (Crab-eating macaque).